A 258-amino-acid chain; its full sequence is Deoxyribose-phosphate aldolase 2 (258 aa).

The active-site Proton donor/acceptor is the Asp-102. The active-site Schiff-base intermediate with acetaldehyde is the Lys-165. Lys-199 (proton donor/acceptor) is an active-site residue.

The protein belongs to the DeoC/FbaB aldolase family. DeoC type 2 subfamily.

It localises to the cytoplasm. The enzyme catalyses 2-deoxy-D-ribose 5-phosphate = D-glyceraldehyde 3-phosphate + acetaldehyde. Its pathway is carbohydrate degradation; 2-deoxy-D-ribose 1-phosphate degradation; D-glyceraldehyde 3-phosphate and acetaldehyde from 2-deoxy-alpha-D-ribose 1-phosphate: step 2/2. Functionally, catalyzes a reversible aldol reaction between acetaldehyde and D-glyceraldehyde 3-phosphate to generate 2-deoxy-D-ribose 5-phosphate. This Vibrio vulnificus (strain YJ016) protein is Deoxyribose-phosphate aldolase 2 (deoC2).